Reading from the N-terminus, the 158-residue chain is SsrA-binding protein (158 aa).

It belongs to the SmpB family.

It is found in the cytoplasm. Its function is as follows. Required for rescue of stalled ribosomes mediated by trans-translation. Binds to transfer-messenger RNA (tmRNA), required for stable association of tmRNA with ribosomes. tmRNA and SmpB together mimic tRNA shape, replacing the anticodon stem-loop with SmpB. tmRNA is encoded by the ssrA gene; the 2 termini fold to resemble tRNA(Ala) and it encodes a 'tag peptide', a short internal open reading frame. During trans-translation Ala-aminoacylated tmRNA acts like a tRNA, entering the A-site of stalled ribosomes, displacing the stalled mRNA. The ribosome then switches to translate the ORF on the tmRNA; the nascent peptide is terminated with the 'tag peptide' encoded by the tmRNA and targeted for degradation. The ribosome is freed to recommence translation, which seems to be the essential function of trans-translation. In Pseudoalteromonas atlantica (strain T6c / ATCC BAA-1087), this protein is SsrA-binding protein.